Consider the following 222-residue polypeptide: Cytidylate kinase (222 aa).

Residue 10–18 (GPSASGKGT) participates in ATP binding.

It belongs to the cytidylate kinase family. Type 1 subfamily.

Its subcellular location is the cytoplasm. The catalysed reaction is CMP + ATP = CDP + ADP. It catalyses the reaction dCMP + ATP = dCDP + ADP. This chain is Cytidylate kinase, found in Chromobacterium violaceum (strain ATCC 12472 / DSM 30191 / JCM 1249 / CCUG 213 / NBRC 12614 / NCIMB 9131 / NCTC 9757 / MK).